Reading from the N-terminus, the 558-residue chain is Protein OS-9 homolog (558 aa).

An N-terminal signal peptide occupies residues Met1–Thr17. The N-linked (GlcNAc...) asparagine glycan is linked to Asn68. Residues Gly111–Asp237 form the MRH domain. An intrachain disulfide couples Cys113 to Cys126. A mannooligosaccharide derivative is bound by residues Gln133, Arg197, Glu219, and Tyr225. Cystine bridges form between Cys190/Cys223 and Cys205/Cys235. Disordered regions lie at residues Ser435–Glu508 and Lys539–Asp558. Over residues Lys441–Asp466 the composition is skewed to basic and acidic residues. The span at Asp474 to Glu492 shows a compositional bias: polar residues. A compositionally biased stretch (acidic residues) spans Asp543 to Asp558.

This sequence belongs to the OS-9 family. Interacts with missfolded ER lumenal proteins.

It localises to the endoplasmic reticulum membrane. Its function is as follows. Lectin involved in the quality control of the secretory pathway. As a member of the endoplasmic reticulum-associated degradation lumenal (ERAD-L) surveillance system, targets misfolded endoplasmic reticulum lumenal glycoproteins for degradation. This chain is Protein OS-9 homolog (YOS9), found in Yarrowia lipolytica (strain CLIB 122 / E 150) (Yeast).